Consider the following 162-residue polypeptide: 3-hydroxyacyl-[acyl-carrier-protein] dehydratase FabZ (162 aa).

His49 is an active-site residue.

Belongs to the thioester dehydratase family. FabZ subfamily.

It localises to the cytoplasm. It catalyses the reaction a (3R)-hydroxyacyl-[ACP] = a (2E)-enoyl-[ACP] + H2O. Involved in unsaturated fatty acids biosynthesis. Catalyzes the dehydration of short chain beta-hydroxyacyl-ACPs and long chain saturated and unsaturated beta-hydroxyacyl-ACPs. The sequence is that of 3-hydroxyacyl-[acyl-carrier-protein] dehydratase FabZ from Solibacter usitatus (strain Ellin6076).